The sequence spans 1198 residues: Chromosome partition protein Smc (1198 aa).

40–47 provides a ligand contact to ATP; that stretch reads PNGSGKSN. Coiled coils occupy residues 175-211 and 322-524; these read ITKYRMRKREALKRLDETEHNLERIRDILAEIEGQLG and LGEQ…LAKK. The SMC hinge domain maps to 534-647; it reads CGTLADLLQV…VTDMEAATRV (114 aa). Positions 687–1042 form a coiled coil; sequence SREIQELRQE…AELDKTMSER (356 aa). A disordered region spans residues 785-818; it reads AEEQSKLTDSIQEAQEALARQEEKNRQASREMEQ. The span at 803-818 shows a compositional bias: basic and acidic residues; it reads ARQEEKNRQASREMEQ.

Belongs to the SMC family. As to quaternary structure, homodimer.

The protein localises to the cytoplasm. In terms of biological role, required for chromosome condensation and partitioning. The chain is Chromosome partition protein Smc from Desulfitobacterium hafniense (strain Y51).